A 63-amino-acid polypeptide reads, in one-letter code: Large ribosomal subunit protein bL28 (63 aa).

The interval 1-20 is disordered; the sequence is MSKRCAITGKGPMVGNNVSH.

The protein belongs to the bacterial ribosomal protein bL28 family.

This chain is Large ribosomal subunit protein bL28, found in Campylobacter concisus (strain 13826).